Consider the following 610-residue polypeptide: MSDRFDAKAFLSTVTSQPGVYRMYDATGTVIYVGKAKDLKKRLASYFRQQVGSRKTETLVKNIAQIDVTVTHTETEALLLEHNYIKLYQPRYNVLLRDDKSYPLIFLSADSHPRLAVHRGAKHAKGEYFGPFPNSYAVRETLALLQKLFPIRQCENSVYRNRSRPCLQYQIGRCLGPCVAGLVSEDEYRQQVDYVRLFLSGKDQQVLHQLIERMENASKALNFEEAARIRDQIQAVRRVTERQFVSGNSDDLDVIGVAFEAGMACLHVLFIRQGKVLGSRSYFPKVPGGTEMSEVVQTFVGQFYLQGSQMRTLPAEILLDFTLPEKELLAESLSELAGRKIQIQSKPRGDRARYLKLARTNAATALTTKLSQQSTIHQRLAELTKVLNLSEINRMECFDISHTMGEQTVASCVVFDANGPLRSEYRRYNITGITPGDDYAAMAQVLKRRYGKALEEKKIPDVIFIDGGKGQLGMAIDVFNSLNVSWDKNKPLLIGIAKGADRKAGLETLFFVPEGEGIALPSDSPALHVIQHIRDDSHNHAITGHRQRRAKVRNTSALELIDGVGPKRRQVLLKYMGGLQPLLNASVEEIAKVPGISQALAEKIYNALKH.

The GIY-YIG domain occupies Ser16–Val94. The 36-residue stretch at Gln204–Val239 folds into the UVR domain.

It belongs to the UvrC family. Interacts with UvrB in an incision complex.

The protein localises to the cytoplasm. The UvrABC repair system catalyzes the recognition and processing of DNA lesions. UvrC both incises the 5' and 3' sides of the lesion. The N-terminal half is responsible for the 3' incision and the C-terminal half is responsible for the 5' incision. In Serratia proteamaculans (strain 568), this protein is UvrABC system protein C.